Reading from the N-terminus, the 343-residue chain is Glycerol-3-phosphate dehydrogenase [NAD(P)+] (343 aa).

Positions 22, 23, 43, and 117 each coordinate NADPH. Residues lysine 117, glycine 146, and threonine 148 each contribute to the sn-glycerol 3-phosphate site. Alanine 150 lines the NADPH pocket. Lysine 202, aspartate 255, serine 265, arginine 266, and asparagine 267 together coordinate sn-glycerol 3-phosphate. The active-site Proton acceptor is the lysine 202. Arginine 266 lines the NADPH pocket. NADPH contacts are provided by valine 290 and glutamate 292.

This sequence belongs to the NAD-dependent glycerol-3-phosphate dehydrogenase family.

It is found in the cytoplasm. It carries out the reaction sn-glycerol 3-phosphate + NAD(+) = dihydroxyacetone phosphate + NADH + H(+). It catalyses the reaction sn-glycerol 3-phosphate + NADP(+) = dihydroxyacetone phosphate + NADPH + H(+). It participates in membrane lipid metabolism; glycerophospholipid metabolism. In terms of biological role, catalyzes the reduction of the glycolytic intermediate dihydroxyacetone phosphate (DHAP) to sn-glycerol 3-phosphate (G3P), the key precursor for phospholipid synthesis. This Aliivibrio fischeri (strain ATCC 700601 / ES114) (Vibrio fischeri) protein is Glycerol-3-phosphate dehydrogenase [NAD(P)+].